The sequence spans 272 residues: Lyso-glycine lipid O-acyltransferase (272 aa).

Belongs to the O-acyltransferase GlsA family.

The catalysed reaction is a lyso-glycine lipid + a fatty acyl-[ACP] = a glycine lipid + holo-[ACP]. The enzyme catalyses N-[(3R)-3-hydroxyhexadecanoyl]-glycine + hexadecanoyl-[ACP] = N-[(3R)-3-(hexadecanoyloxy)hexadecanoyl]-glycine + holo-[ACP]. The protein operates within lipid metabolism. In terms of biological role, is involved in the production of glycine lipids (GL), which are phosphorus-free membrane lipids important for fitness during growth of the human gut bacterium B.thetaiotaomicron in vivo and in vitro. Catalyzes the second step of GL biosynthesis, i.e. the O-acylation of the hydroxyl group of lyso-glycine lipids, resulting in the production of the mature diacylated glycine lipids. The chain is Lyso-glycine lipid O-acyltransferase from Bacteroides thetaiotaomicron (strain ATCC 29148 / DSM 2079 / JCM 5827 / CCUG 10774 / NCTC 10582 / VPI-5482 / E50).